The primary structure comprises 353 residues: C2 calcium-dependent domain-containing protein 4D (353 aa).

Positions 135–191 are disordered; it reads CRAPDSDTASSPDSSPFGSPRPGLGRRRVSRPHSLSPEKASSADTSPHSPRRAGPPT. Residues 140–150 are compositionally biased toward low complexity; that stretch reads SDTASSPDSSP. Residues 217 to 343 form the C2 domain; sequence RGGQLRLSTE…PPLGGGLGPG (127 aa).

This chain is C2 calcium-dependent domain-containing protein 4D (C2CD4D), found in Homo sapiens (Human).